The sequence spans 168 residues: Protein SprT (168 aa).

Residues 20-166 (EKLQQANKYL…RHCQAILQLI (147 aa)) form the SprT-like domain. His78 provides a ligand contact to Zn(2+). The active site involves Glu79. Residue His82 coordinates Zn(2+).

The protein belongs to the SprT family. Zn(2+) is required as a cofactor.

Its subcellular location is the cytoplasm. The polypeptide is Protein SprT (Proteus mirabilis (strain HI4320)).